A 166-amino-acid chain; its full sequence is Endoribonuclease YbeY (166 aa).

Zn(2+) contacts are provided by His125, His129, and His135.

This sequence belongs to the endoribonuclease YbeY family. Zn(2+) serves as cofactor.

It is found in the cytoplasm. In terms of biological role, single strand-specific metallo-endoribonuclease involved in late-stage 70S ribosome quality control and in maturation of the 3' terminus of the 16S rRNA. The polypeptide is Endoribonuclease YbeY (Alkalilimnicola ehrlichii (strain ATCC BAA-1101 / DSM 17681 / MLHE-1)).